A 488-amino-acid polypeptide reads, in one-letter code: Aspartyl/glutamyl-tRNA(Asn/Gln) amidotransferase subunit B (488 aa).

Belongs to the GatB/GatE family. GatB subfamily. As to quaternary structure, heterotrimer of A, B and C subunits.

It carries out the reaction L-glutamyl-tRNA(Gln) + L-glutamine + ATP + H2O = L-glutaminyl-tRNA(Gln) + L-glutamate + ADP + phosphate + H(+). The catalysed reaction is L-aspartyl-tRNA(Asn) + L-glutamine + ATP + H2O = L-asparaginyl-tRNA(Asn) + L-glutamate + ADP + phosphate + 2 H(+). Functionally, allows the formation of correctly charged Asn-tRNA(Asn) or Gln-tRNA(Gln) through the transamidation of misacylated Asp-tRNA(Asn) or Glu-tRNA(Gln) in organisms which lack either or both of asparaginyl-tRNA or glutaminyl-tRNA synthetases. The reaction takes place in the presence of glutamine and ATP through an activated phospho-Asp-tRNA(Asn) or phospho-Glu-tRNA(Gln). This Ralstonia nicotianae (strain ATCC BAA-1114 / GMI1000) (Ralstonia solanacearum) protein is Aspartyl/glutamyl-tRNA(Asn/Gln) amidotransferase subunit B.